The following is a 466-amino-acid chain: MSLRFYDTRTRQVRDFVPLREGCVSLYLCGATVQAPPHIGHIRSGVSFDILRRWLMYRGYRVIFCRNVTDIDDKILNVAASEGVQWWEVSERNYRAFAEAYDTLGCLPPTVEPRATGHIPEMIELMRRLIDRGHAYVAEDGSGDVYFDVTSYAEYGSLSNQRLEEMRAAEDGDARAKRDPRDFALWKGARPGEPSWPTPWGPGRPGWHLECSAMATKYLGPTFDIHGGGVDLVFPHHENESAQSRAAGDGFARYWLHNGLLTTGGEKMSKSLGNSLLIPEITRRVRPVELRYYLGQAHYRSNLDYSEESLREAASAYQRLENFLVRVNEIAGPIPDDVPVPEEFAAALDDDLGVPQALAVAHNHVREGNSALAEGAKERAAQIGARLRAMLAVLGLDPLSPQWAGSDDSGLHDVVDSLVSVVLEQRQEARKRKDYATADRIRDQLAEMGIAVEDTPQGPRWELKRS.

Cysteine 29 is a Zn(2+) binding site. Residues 31–41 (ATVQAPPHIGH) carry the 'HIGH' region motif. Residues cysteine 211, histidine 236, and glutamate 240 each coordinate Zn(2+). The short motif at 267 to 271 (KMSKS) is the 'KMSKS' region element. Lysine 270 provides a ligand contact to ATP.

Belongs to the class-I aminoacyl-tRNA synthetase family. As to quaternary structure, monomer. Zn(2+) serves as cofactor.

The protein resides in the cytoplasm. The enzyme catalyses tRNA(Cys) + L-cysteine + ATP = L-cysteinyl-tRNA(Cys) + AMP + diphosphate. The protein is Cysteine--tRNA ligase of Thermobifida fusca (strain YX).